We begin with the raw amino-acid sequence, 274 residues long: Ribosomal RNA small subunit methyltransferase A (274 aa).

S-adenosyl-L-methionine-binding residues include histidine 15, leucine 17, glycine 42, glutamate 64, aspartate 89, and asparagine 108.

Belongs to the class I-like SAM-binding methyltransferase superfamily. rRNA adenine N(6)-methyltransferase family. RsmA subfamily.

It is found in the cytoplasm. The enzyme catalyses adenosine(1518)/adenosine(1519) in 16S rRNA + 4 S-adenosyl-L-methionine = N(6)-dimethyladenosine(1518)/N(6)-dimethyladenosine(1519) in 16S rRNA + 4 S-adenosyl-L-homocysteine + 4 H(+). Its function is as follows. Specifically dimethylates two adjacent adenosines (A1518 and A1519) in the loop of a conserved hairpin near the 3'-end of 16S rRNA in the 30S particle. May play a critical role in biogenesis of 30S subunits. In Prochlorococcus marinus (strain MIT 9215), this protein is Ribosomal RNA small subunit methyltransferase A.